The following is a 707-amino-acid chain: Ribosomal RNA large subunit methyltransferase K/L (707 aa).

The 112-residue stretch at 43-154 (QIYRCCLWSR…KDKAILGVDM (112 aa)) folds into the THUMP domain.

The protein belongs to the methyltransferase superfamily. RlmKL family.

The protein localises to the cytoplasm. The catalysed reaction is guanosine(2445) in 23S rRNA + S-adenosyl-L-methionine = N(2)-methylguanosine(2445) in 23S rRNA + S-adenosyl-L-homocysteine + H(+). The enzyme catalyses guanosine(2069) in 23S rRNA + S-adenosyl-L-methionine = N(2)-methylguanosine(2069) in 23S rRNA + S-adenosyl-L-homocysteine + H(+). Functionally, specifically methylates the guanine in position 2445 (m2G2445) and the guanine in position 2069 (m7G2069) of 23S rRNA. This Vibrio parahaemolyticus serotype O3:K6 (strain RIMD 2210633) protein is Ribosomal RNA large subunit methyltransferase K/L.